The sequence spans 220 residues: uncharacterized protein (220 aa).

This is an uncharacterized protein from Schizosaccharomyces pombe (strain 972 / ATCC 24843) (Fission yeast).